A 129-amino-acid polypeptide reads, in one-letter code: UPF0344 protein SSP1805 (129 aa).

Helical transmembrane passes span 1–21 (MLHM…AAYF), 36–56 (IHML…WVWI), 68–88 (MLLT…EVTI), and 100–120 (LMWT…ILPM).

The protein belongs to the UPF0344 family.

It localises to the cell membrane. In Staphylococcus saprophyticus subsp. saprophyticus (strain ATCC 15305 / DSM 20229 / NCIMB 8711 / NCTC 7292 / S-41), this protein is UPF0344 protein SSP1805.